The following is a 308-amino-acid chain: Apolipoprotein F (308 aa).

The protein belongs to the apolipoprotein F family.

It is found in the secreted. Functionally, minor apolipoprotein that associates with LDL. Inhibits cholesteryl ester transfer protein (CETP) activity and appears to be an important regulator of cholesterol transport. Also associates to a lesser degree with VLDL, Apo-AI and Apo-AII. This Rattus norvegicus (Rat) protein is Apolipoprotein F (Apof).